The following is an 828-amino-acid chain: DNA gyrase subunit A (828 aa).

The Topo IIA-type catalytic domain maps to 32-497 (LPDVRDGLKP…EVLSLEDEDL (466 aa)). Residue tyrosine 120 is the O-(5'-phospho-DNA)-tyrosine intermediate of the active site. A GyrA-box motif is present at residues 524 to 530 (QKRGGRG).

This sequence belongs to the type II topoisomerase GyrA/ParC subunit family. As to quaternary structure, heterotetramer, composed of two GyrA and two GyrB chains. In the heterotetramer, GyrA contains the active site tyrosine that forms a transient covalent intermediate with DNA, while GyrB binds cofactors and catalyzes ATP hydrolysis.

It localises to the cytoplasm. It carries out the reaction ATP-dependent breakage, passage and rejoining of double-stranded DNA.. Functionally, a type II topoisomerase that negatively supercoils closed circular double-stranded (ds) DNA in an ATP-dependent manner to modulate DNA topology and maintain chromosomes in an underwound state. Negative supercoiling favors strand separation, and DNA replication, transcription, recombination and repair, all of which involve strand separation. Also able to catalyze the interconversion of other topological isomers of dsDNA rings, including catenanes and knotted rings. Type II topoisomerases break and join 2 DNA strands simultaneously in an ATP-dependent manner. The chain is DNA gyrase subunit A from Streptococcus pyogenes serotype M1.